We begin with the raw amino-acid sequence, 100 residues long: UPF0213 protein YhbQ (100 aa).

In terms of domain architecture, GIY-YIG spans 2–77; it reads TPWFLYLIRT…KQLTKRQKER (76 aa).

Belongs to the UPF0213 family.

In Escherichia coli O1:K1 / APEC, this protein is UPF0213 protein YhbQ.